Reading from the N-terminus, the 215-residue chain is Large ribosomal subunit protein bL25 (215 aa).

Positions 192 to 203 (EEATEEEEEAAE) are enriched in acidic residues. Residues 192–215 (EEATEEEEEAAEPEVIKRKEEEEE) are disordered. Over residues 205–215 (EVIKRKEEEEE) the composition is skewed to basic and acidic residues.

It belongs to the bacterial ribosomal protein bL25 family. CTC subfamily. In terms of assembly, part of the 50S ribosomal subunit; part of the 5S rRNA/L5/L18/L25 subcomplex. Contacts the 5S rRNA. Binds to the 5S rRNA independently of L5 and L18.

This is one of the proteins that binds to the 5S RNA in the ribosome where it forms part of the central protuberance. The chain is Large ribosomal subunit protein bL25 from Thermotoga maritima (strain ATCC 43589 / DSM 3109 / JCM 10099 / NBRC 100826 / MSB8).